Consider the following 380-residue polypeptide: Probable polyglutamine synthesis accessory protein MT0602 (380 aa).

This sequence belongs to the CapA family.

Could be involved in the biosynthesis, transport or localization of poly-alpha-L-glutamine (PLG), a cell wall component. Contributes to stress tolerance and virulence. In Mycobacterium tuberculosis (strain CDC 1551 / Oshkosh), this protein is Probable polyglutamine synthesis accessory protein MT0602.